A 247-amino-acid polypeptide reads, in one-letter code: Probable dihydroorotate dehydrogenase B (NAD(+)), electron transfer subunit (247 aa).

The region spanning 1–87 is the FAD-binding FR-type domain; it reads MLRRVTLKET…RGPYGNGFKE (87 aa). Cysteine 200, cysteine 205, cysteine 208, and cysteine 216 together coordinate [2Fe-2S] cluster.

This sequence belongs to the PyrK family. In terms of assembly, heterotetramer of 2 PyrK and 2 PyrD type B subunits. It depends on [2Fe-2S] cluster as a cofactor. Requires FAD as cofactor.

The protein operates within pyrimidine metabolism; UMP biosynthesis via de novo pathway; orotate from (S)-dihydroorotate (NAD(+) route): step 1/1. Responsible for channeling the electrons from the oxidation of dihydroorotate from the FMN redox center in the PyrD type B subunit to the ultimate electron acceptor NAD(+). The polypeptide is Probable dihydroorotate dehydrogenase B (NAD(+)), electron transfer subunit (Pyrococcus horikoshii (strain ATCC 700860 / DSM 12428 / JCM 9974 / NBRC 100139 / OT-3)).